Consider the following 148-residue polypeptide: Augurin (148 aa).

A signal peptide spans methionine 1–glycine 31. 2 propeptides span residues asparagine 32 to arginine 70 and serine 133 to tyrosine 148.

The protein belongs to the augurin family. In terms of tissue distribution, expressed in the intermediate lobe of pituitary, glomerular layer of adrenal cortex, choroid plexus and atrioventricular node of the heart. Expressed in the brain with high expression in the choroid plexus and the epithelial lining of the central canal and expression in the gray matter of the spinal cord (at protein level).

The protein localises to the secreted. It is found in the cytoplasm. It localises to the apical cell membrane. In terms of biological role, probable hormone that may attenuate cell proliferation and induce senescence of oligodendrocyte and neural precursor cells in the central nervous system. ECRG4-induced senescence is characterized by G1 arrest, RB1 dephosphorylation and accelerated CCND1 and CCND3 proteasomal degradation. The protein is Augurin of Mus musculus (Mouse).